A 143-amino-acid chain; its full sequence is Nucleoside diphosphate kinase (143 aa).

Lys11, Phe59, Arg87, Thr93, Arg104, and Asn114 together coordinate ATP. The active-site Pros-phosphohistidine intermediate is His117.

The protein belongs to the NDK family. In terms of assembly, homotetramer. Requires Mg(2+) as cofactor.

It localises to the cytoplasm. It carries out the reaction a 2'-deoxyribonucleoside 5'-diphosphate + ATP = a 2'-deoxyribonucleoside 5'-triphosphate + ADP. The enzyme catalyses a ribonucleoside 5'-diphosphate + ATP = a ribonucleoside 5'-triphosphate + ADP. Functionally, major role in the synthesis of nucleoside triphosphates other than ATP. The ATP gamma phosphate is transferred to the NDP beta phosphate via a ping-pong mechanism, using a phosphorylated active-site intermediate. The chain is Nucleoside diphosphate kinase from Edwardsiella ictaluri (strain 93-146).